A 286-amino-acid polypeptide reads, in one-letter code: Pyridoxal kinase PdxY (286 aa).

Residues S9 and 44-45 each bind substrate; that span reads TQ. Residues D111, A143, E148, K181, and 208–211 each bind ATP; that span reads RPLV. A substrate-binding site is contributed by D223.

Belongs to the pyridoxine kinase family. PdxY subfamily. Homodimer. The cofactor is Mg(2+).

The catalysed reaction is pyridoxal + ATP = pyridoxal 5'-phosphate + ADP + H(+). It participates in cofactor metabolism; pyridoxal 5'-phosphate salvage; pyridoxal 5'-phosphate from pyridoxal: step 1/1. Functionally, pyridoxal kinase involved in the salvage pathway of pyridoxal 5'-phosphate (PLP). Catalyzes the phosphorylation of pyridoxal to PLP. The chain is Pyridoxal kinase PdxY from Salmonella paratyphi A (strain ATCC 9150 / SARB42).